Consider the following 223-residue polypeptide: Sigma non-opioid intracellular receptor 1 (223 aa).

The Lumenal portion of the chain corresponds to 1–9 (MQWAVGRRW). The tract at residues 2–8 (QWAVGRR) is targeting to endoplasmic reticulum-associated lipid droplets. A helical transmembrane segment spans residues 10-30 (AWAALLLAVAAVLTQVVWLWL). Residues 31 to 223 (GTQSFVFQRE…LTTYLFGQDP (193 aa)) lie on the Cytoplasmic side of the membrane. Residues 99–106 (SLSEYVLL) form an important for ligand-binding region. Residues 177–223 (VIPSTLAFALADTVFSTQDFLTLFYTLRSYARGLRLELTTYLFGQDP) form a C-terminal hydrophobic region region.

The protein belongs to the ERG2 family. Homotrimer. Forms a ternary complex with ANK2 and ITPR3. The complex is disrupted by agonists. Interacts with KCNA4. Interacts with KCNA2; cocaine consumption leads to increased interaction. Interacts with RNF112 in an oxidative stress-regulated manner. In terms of tissue distribution, widely expressed with higher expression in liver, colon, prostate, placenta, small intestine, heart and pancreas. Expressed in the retina by retinal pigment epithelial cells. Expressed in alpha-motor neurons.

It is found in the nucleus inner membrane. It localises to the nucleus outer membrane. Its subcellular location is the nucleus envelope. The protein resides in the cytoplasmic vesicle. The protein localises to the endoplasmic reticulum membrane. It is found in the membrane. It localises to the lipid droplet. Its subcellular location is the cell junction. The protein resides in the cell membrane. The protein localises to the cell projection. It is found in the growth cone. It localises to the postsynaptic density membrane. Its function is as follows. Functions in lipid transport from the endoplasmic reticulum and is involved in a wide array of cellular functions probably through regulation of the biogenesis of lipid microdomains at the plasma membrane. Involved in the regulation of different receptors it plays a role in BDNF signaling and EGF signaling. Also regulates ion channels like the potassium channel and could modulate neurotransmitter release. Plays a role in calcium signaling through modulation together with ANK2 of the ITP3R-dependent calcium efflux at the endoplasmic reticulum. Plays a role in several other cell functions including proliferation, survival and death. Originally identified for its ability to bind various psychoactive drugs it is involved in learning processes, memory and mood alteration. Necessary for proper mitochondrial axonal transport in motor neurons, in particular the retrograde movement of mitochondria. Plays a role in protecting cells against oxidative stress-induced cell death via its interaction with RNF112. The chain is Sigma non-opioid intracellular receptor 1 (SIGMAR1) from Homo sapiens (Human).